The chain runs to 339 residues: Chromo domain-containing protein cec-3 (339 aa).

A disordered region spans residues 1–21 (MSNEGSREESREPEAREGKSD). A Chromo domain is found at 24-84 (FEVEKILAHK…KLKVTDKTEL (61 aa)). The segment covering 91 to 105 (QIKKNKSQKSKKRSK) has biased composition (basic residues). Disordered regions lie at residues 91–199 (QIKK…APLS) and 215–272 (EEKA…QRTL). 2 stretches are compositionally biased toward basic and acidic residues: residues 106 to 117 (TVSDHESNHDSD) and 171 to 183 (AAME…RNWL). Residues 184–193 (DEESSDDEAE) show a composition bias toward acidic residues. Over residues 230-241 (KPREVVIKKDPS) the composition is skewed to basic and acidic residues. A compositionally biased stretch (low complexity) spans 242–251 (ESPVASASSV).

Expressed in every cell of the embryo (at protein level). In adults, expressed predominantly in the head region and the germline.

It localises to the chromosome. The protein resides in the nucleus. Specifically recognizes and binds methylated 'Lys-9' of histone H3 (H3K9me), with highest preference for trimethylated 'Lys-9' (H3K9me3) followed by dimethylated 'Lys-9' (H3K9me2) followed by monomethylated 'Lys-9' (H3K9me1). Plays a role in maintaining correct unc-4 expression in the VC motor neurons where unc-4 is expressed in the vulval but not in the non-vulval VC neurons. The protein is Chromo domain-containing protein cec-3 (cec-3) of Caenorhabditis elegans.